Consider the following 321-residue polypeptide: Serine/threonine-protein phosphatase PP1 isozyme 4 (321 aa).

Residue A2 is modified to N-acetylalanine. Residues D74, H76, D102, and N134 each coordinate Mn(2+). H135 (proton donor) is an active-site residue. Mn(2+) contacts are provided by H183 and H258.

Belongs to the PPP phosphatase family. PP-1 subfamily. As to quaternary structure, interacts with the DELLA proteins RGA and GAI. Interacts with PIF3 and PIF5. Interacts with the auxin efflux carrier PIN1. Mn(2+) serves as cofactor. As to expression, expressed in the vasculature of roots and cotyledons, tips of leaves, guard cells, bases of trichomes, pistils and stamen filaments.

It is found in the nucleus. The protein resides in the cytoplasm. It catalyses the reaction O-phospho-L-seryl-[protein] + H2O = L-seryl-[protein] + phosphate. It carries out the reaction O-phospho-L-threonyl-[protein] + H2O = L-threonyl-[protein] + phosphate. Its activity is regulated as follows. Phosphatase activity is strongly reduced by the protein phosphatase inhibitor 2 (I-2). Functionally, serine/threonine-protein phosphatase that possesses phosphatase activity toward para-nitrophenyl phosphate (pNPP) in vitro. Acts as a positive regulator in the gibberellin (GA) signaling pathway to regulate plant growth and development. Promotes the GA-induced and proteasomal-dependent degradation of the DELLA proteins RGA and GAI by directly binding and dephosphorylating these proteins. Involved in the regulation of phytochrome B (phyB) signaling pathway that controls photomorphogenesis. Promotes the proteasomal-dependent degradation of PIF5 factor by directly binding and dephosphorylating this protein. Involved in the regulation of pavement cell (PC) interdigitation by modulating the auxin efflux carrier PIN1 polarity and endocytic trafficking. Regulates PIN1 polar targeting through direct binding and dephosphorylation. Acts antagonistically with PID in regulating PC development. In Arabidopsis thaliana (Mouse-ear cress), this protein is Serine/threonine-protein phosphatase PP1 isozyme 4.